The primary structure comprises 577 residues: DNA-directed RNA polymerase subunit alpha (577 aa).

The tract at residues 1-461 is alpha N-terminal domain (alpha-NTD); the sequence is MIKIIIKETF…QLFLPLQQIR (461 aa). The segment at 510–577 is alpha C-terminal domain (alpha-CTD); it reads FDHRLLELDI…ALQLMKLTLK (68 aa).

Belongs to the RNA polymerase alpha chain family. As to quaternary structure, in plastids the minimal PEP RNA polymerase catalytic core is composed of four subunits: alpha, beta, beta', and beta''. When a (nuclear-encoded) sigma factor is associated with the core the holoenzyme is formed, which can initiate transcription.

The protein localises to the plastid. Its subcellular location is the chloroplast. It catalyses the reaction RNA(n) + a ribonucleoside 5'-triphosphate = RNA(n+1) + diphosphate. Its function is as follows. DNA-dependent RNA polymerase catalyzes the transcription of DNA into RNA using the four ribonucleoside triphosphates as substrates. The chain is DNA-directed RNA polymerase subunit alpha from Tupiella akineta (Green alga).